A 115-amino-acid polypeptide reads, in one-letter code: UPF0122 protein NT01CX_2214 (115 aa).

This sequence belongs to the UPF0122 family.

Its function is as follows. Might take part in the signal recognition particle (SRP) pathway. This is inferred from the conservation of its genetic proximity to ftsY/ffh. May be a regulatory protein. This Clostridium novyi (strain NT) protein is UPF0122 protein NT01CX_2214.